The primary structure comprises 246 residues: Alpha-tubulin N-acetyltransferase (246 aa).

Residues 21–202 form the N-acetyltransferase domain; sequence LTLVPDGVSR…NNFVVFHSFF (182 aa). Acetyl-CoA-binding positions include 135 to 148 and 172 to 181; these read FYVD…GYGK and SNKLLGFLRK.

The protein belongs to the acetyltransferase ATAT1 family.

The catalysed reaction is L-lysyl-[alpha-tubulin] + acetyl-CoA = N(6)-acetyl-L-lysyl-[alpha-tubulin] + CoA + H(+). Specifically acetylates 'Lys-40' in alpha-tubulin on the lumenal side of microtubules. Promotes microtubule destabilization and accelerates microtubule dynamics; this activity may be independent of acetylation activity. Acetylates alpha-tubulin with a slow enzymatic rate, due to a catalytic site that is not optimized for acetyl transfer. Enters the microtubule through each end and diffuses quickly throughout the lumen of microtubules. Acetylates only long/old microtubules because of its slow acetylation rate since it does not have time to act on dynamically unstable microtubules before the enzyme is released. This is Alpha-tubulin N-acetyltransferase from Leishmania infantum.